The following is a 102-amino-acid chain: Crustacean hyperglycemic hormones 3 (102 aa).

An N-terminal signal peptide occupies residues 1 to 22 (MIALRLIAVTLVVAMAASTTWA). Intrachain disulfides connect Cys-35-Cys-71, Cys-51-Cys-67, and Cys-54-Cys-80. The residue at position 100 (Val-100) is a Valine amide.

The protein belongs to the arthropod CHH/MIH/GIH/VIH hormone family.

The protein localises to the secreted. Hormone found in the sinus gland of isopods and decapods which controls the blood sugar level. Has a secretagogue action over the amylase released from the midgut gland. May act as a stress hormone and may be involved in the control of molting and reproduction. The chain is Crustacean hyperglycemic hormones 3 (CHH3) from Penaeus monodon (Giant tiger prawn).